Here is a 375-residue protein sequence, read N- to C-terminus: Actin (375 aa).

The protein belongs to the actin family.

Its subcellular location is the cytoplasm. The protein resides in the cytoskeleton. The catalysed reaction is ATP + H2O = ADP + phosphate + H(+). Its function is as follows. Actins are highly conserved proteins that are involved in various types of cell motility and are ubiquitously expressed in all eukaryotic cells. The polypeptide is Actin (Sterkiella cavicola (Ciliate)).